The sequence spans 218 residues: Small ribosomal subunit protein uS3c (218 aa).

The KH type-2 domain maps to 47-118 (VQKQIKNSSN…KIQITLKNVL (72 aa)).

It belongs to the universal ribosomal protein uS3 family. In terms of assembly, part of the 30S ribosomal subunit.

It is found in the plastid. Its subcellular location is the chloroplast. The sequence is that of Small ribosomal subunit protein uS3c (rps3) from Angiopteris evecta (Mule's foot fern).